The chain runs to 172 residues: C-phycocyanin beta chain (172 aa).

Asn-72 bears the N4-methylasparagine mark. (2R,3E)-phycocyanobilin contacts are provided by Cys-82 and Cys-153.

This sequence belongs to the phycobiliprotein family. Heterodimer of an alpha and a beta subunit, which further assembles into trimers and the trimers into hexamers. The basic functional unit of phycobiliproteins is a ring-shaped hexamer formed from two back-to-back trimers contacting via the alpha chain subunits. The trimers are composed of alpha/beta subunit heterodimers arranged around a three-fold axis of symmetry. The phycoerythrins also contain a gamma subunit which is located in the center of the hexamer. Contains two covalently linked phycocyanobilin chromophores.

The protein localises to the plastid. It localises to the cyanelle thylakoid membrane. Functionally, light-harvesting photosynthetic bile pigment-protein from the phycobiliprotein complex (phycobilisome, PBS). Phycocyanin is the major phycobiliprotein in the PBS rod. The polypeptide is C-phycocyanin beta chain (cpcB) (Cyanophora paradoxa).